A 197-amino-acid chain; its full sequence is MEAAAARPVIRVAAICGSLRKASYNGGLLRAAAGVCEESIPGLRVDHVDISGLPLLNTDLETADGGFPPAVEAFRDKVRQADCFLFGSPEYNYSIATPLKNALDWASRGQNCWADKPAAIVSAGGGFGGGRSQYHLRQVGVFLDLHFINKPELAVKAFEQPPKFDSDGNLIDAQIRERIKQVLLSLQAFTLRLQKKD.

Belongs to the SsuE family. In terms of assembly, homotetramer. Requires FMN as cofactor.

The catalysed reaction is a quinone + NADH + H(+) = a quinol + NAD(+). It catalyses the reaction a quinone + NADPH + H(+) = a quinol + NADP(+). Functionally, the enzyme apparently serves as a quinone reductase in connection with conjugation reactions of hydroquinones involved in detoxification pathways. The sequence is that of Probable NADPH:quinone oxidoreductase 1 from Oryza sativa subsp. japonica (Rice).